We begin with the raw amino-acid sequence, 590 residues long: Cytidine monophosphate-N-acetylneuraminic acid hydroxylase (590 aa).

The Rieske domain occupies leucine 14–leucine 112. Residues cysteine 54, histidine 56, cysteine 75, and histidine 78 each contribute to the [2Fe-2S] cluster site.

This sequence belongs to the CMP-Neu5Ac hydroxylase family. The cofactor is [2Fe-2S] cluster.

The protein localises to the cytoplasm. The enzyme catalyses CMP-N-acetyl-beta-neuraminate + 2 Fe(II)-[cytochrome b5] + O2 + 2 H(+) = CMP-N-glycoloyl-beta-neuraminate + 2 Fe(III)-[cytochrome b5] + H2O. It functions in the pathway amino-sugar metabolism; N-acetylneuraminate metabolism. Functionally, sialic acids are components of carbohydrate chains of glycoconjugates and are involved in cell-cell recognition and cell-pathogen interactions. Catalyzes the conversion of CMP-N-acetylneuraminic acid (CMP-Neu5Ac) into its hydroxylated derivative CMP-N-glycolylneuraminic acid (CMP-Neu5Gc), a sialic acid abundantly expressed at the surface of many cells. In Pan troglodytes (Chimpanzee), this protein is Cytidine monophosphate-N-acetylneuraminic acid hydroxylase.